The following is a 2053-amino-acid chain: Cell adhesion molecule DSCAML1 (2053 aa).

Positions 1–18 (MWLVTFLLLLDSLHKARP) are cleaved as a signal peptide. 9 Ig-like C2-type domains span residues 19-119 (EDVG…NIRV), 115-217 (PNIR…ARLS), 226-306 (PTIL…AEAT), 314-402 (PLHV…AIIA), 408-501 (PRIV…ARIN), 506-586 (PSIR…LSIS), 596-685 (PPLI…RQLI), 690-784 (PRFV…MFLT), and 788-885 (PAMI…LTVQ). At 19 to 1591 (EDVGTSLYFV…AQGEGDDVKK (1573 aa)) the chain is on the extracellular side. Residues asparagine 29 and asparagine 79 are each glycosylated (N-linked (GlcNAc...) asparagine). Cystine bridges form between cysteine 47/cysteine 103, cysteine 146/cysteine 198, cysteine 247/cysteine 294, cysteine 336/cysteine 386, and cysteine 429/cysteine 485. N-linked (GlcNAc...) asparagine glycans are attached at residues asparagine 368, asparagine 471, asparagine 513, asparagine 556, asparagine 666, asparagine 710, asparagine 749, asparagine 796, and asparagine 809. Disulfide bonds link cysteine 526/cysteine 575 and cysteine 617/cysteine 669. A disulfide bond links cysteine 711 and cysteine 767. The cysteines at positions 810 and 867 are disulfide-linked. 4 Fibronectin type-III domains span residues 887–984 (PPDP…TEEA), 989–1088 (PPMD…TLED), 1093–1189 (PPEN…TKED), and 1193–1288 (PPAG…AGKA). Asparagine 926, asparagine 1082, asparagine 1144, asparagine 1162, asparagine 1275, and asparagine 1345 each carry an N-linked (GlcNAc...) asparagine glycan. The Ig-like C2-type 10 domain maps to 1278–1377 (EKVTIEPAGK…TGGFDTIIVN (100 aa)). A disulfide bridge connects residues cysteine 1311 and cysteine 1363. Fibronectin type-III domains lie at 1383 to 1477 (PPDQ…THGR) and 1478 to 1578 (EPSF…TIPP). N-linked (GlcNAc...) asparagine glycans are attached at residues asparagine 1492, asparagine 1531, and asparagine 1561. Residues 1592 to 1612 (LFTIGCPVILATLGVALLFIV) traverse the membrane as a helical segment. Over 1613–2053 (RKKRKEKRLK…GAYSKSYTLV (441 aa)) the chain is Cytoplasmic. Disordered stretches follow at residues 1715-1741 (PLIDMSDIRPGTNPVSRKNVKSAHSTR), 1773-1803 (HGVTVTESDSYSASLSQDTDKGRNSMVSTES), 1840-1862 (SSDQMTTGTNENADSMTSMSTPS), and 1974-2053 (LAMP…YTLV). Basic residues predominate over residues 1732–1741 (KNVKSAHSTR). Residues 1773 to 1789 (HGVTVTESDSYSASLSQ) are compositionally biased toward polar residues. The span at 1977–2009 (PAPPAGTAPPAPGPTPAEPPTAPSAAPPAPSTE) shows a compositional bias: pro residues. Polar residues predominate over residues 2029-2041 (EMSTSGVGRSQKQ).

In terms of assembly, homodimer; mediates homophilic interactions to promote cell adhesion. In terms of tissue distribution, detected in heart, liver, pancreas, skeletal muscle, kidney and in brain, in particular in the amygdala, caudate nucleus, corpus callosum, hippocampus, substantia nigra, thalamus and subthalamus.

Its subcellular location is the cell membrane. It is found in the synapse. In terms of biological role, cell adhesion molecule that plays a role in neuronal self-avoidance. Promotes repulsion between specific neuronal processes of either the same cell or the same subtype of cells. Promotes both isoneuronal self-avoidance for creating an orderly neurite arborization in retinal rod bipolar cells and heteroneuronal self-avoidance to maintain mosaic spacing between AII amacrine cells. Adhesion molecule that promotes lamina-specific synaptic connections in the retina: expressed in specific subsets of interneurons and retinal ganglion cells (RGCs) and promotes synaptic connectivity via homophilic interactions. This is Cell adhesion molecule DSCAML1 (DSCAML1) from Homo sapiens (Human).